A 374-amino-acid chain; its full sequence is MSFNKLKFGATIGIIGGGQLGKMMAQSAQKMGYKVVVLDPSEDCPCRYVAHEFIQAKYDDEKALNQLGQKCDVITYEFENISAQQLKLLCEKYNIPQGYQAIQLLQDRLTEKETLKSAGTKVVPFISVKESTDIDKAIETLGYPFIVKTRFGGYDGKGQVLINNEKDLQEGFKLIETSECVAEKYLNIKKEVSLTVTRGNNNQITFFPLQENEHRNQILFKTIVPARIDKTAEAKEQVNKIIQSIHFIGTFTVEFFIDSNNQLYVNEIAPRPHNSGHYSIEACDYSQFDTHILAVTGQSLPNSIELLKPAVMMNLLGKDLDLLENEFNEHPEWHLHIYGKSERKDSRKMGHMTVLTNDVNQTEQDMYAKFEGSN.

ATP-binding positions include Arg108, Lys148, 153 to 159 (GYDGKGQ), 183 to 186 (EKYL), Glu191, His214, and 266 to 267 (NE). In terms of domain architecture, ATP-grasp spans 112–296 (KETLKSAGTK…QFDTHILAVT (185 aa)).

It belongs to the PurK/PurT family. As to quaternary structure, homodimer.

The enzyme catalyses 5-amino-1-(5-phospho-beta-D-ribosyl)imidazole + hydrogencarbonate + ATP = 5-carboxyamino-1-(5-phospho-D-ribosyl)imidazole + ADP + phosphate + 2 H(+). It participates in purine metabolism; IMP biosynthesis via de novo pathway; 5-amino-1-(5-phospho-D-ribosyl)imidazole-4-carboxylate from 5-amino-1-(5-phospho-D-ribosyl)imidazole (N5-CAIR route): step 1/2. Its function is as follows. Catalyzes the ATP-dependent conversion of 5-aminoimidazole ribonucleotide (AIR) and HCO(3)(-) to N5-carboxyaminoimidazole ribonucleotide (N5-CAIR). This chain is N5-carboxyaminoimidazole ribonucleotide synthase, found in Staphylococcus aureus (strain MSSA476).